A 477-amino-acid polypeptide reads, in one-letter code: MQWEPVIGLEIHAQLATKSKIFSGAATAYGAPPNTQACAVDLGLPGVLPVLNQAVVRMAVKFGLAIEAKIAKHSVFARKNYFYPDLPKGYQISQYELPIVADGHVIIELEDGVEKRIEIVRAHLEEDAGKSLHEDFHGMTGIDLNRAGTPLLEIVSGPDLRSTKEAVTYMKKIHTLVRYLGICDGNMQEGSFRCDANISIRPQGQETLGTRTELKNINSFRFVERALQYEIERQTEVLESGGQVLQETRLFDPAKNETRPMRTKEEATDYRYFPDPDLLPLVLEDSFIDEVRETLPELPDAKRKRFVMEYALSAYDASVLTASRELADYYEAVVKTADGEAKLSANWVMGDLAGALNKEGKSIADSPVSPEQLGQLIKRIADETISGKIAKTVFETMYAQGGKADEIIARQGLKQVTDTASIEKLIDEVLAANPQQVTQYQGGKDKLFGFFVGQVMKTSKGKANPQQLNELLKKKLS.

This sequence belongs to the GatB/GatE family. GatB subfamily. As to quaternary structure, heterotrimer of A, B and C subunits.

It catalyses the reaction L-glutamyl-tRNA(Gln) + L-glutamine + ATP + H2O = L-glutaminyl-tRNA(Gln) + L-glutamate + ADP + phosphate + H(+). It carries out the reaction L-aspartyl-tRNA(Asn) + L-glutamine + ATP + H2O = L-asparaginyl-tRNA(Asn) + L-glutamate + ADP + phosphate + 2 H(+). Functionally, allows the formation of correctly charged Asn-tRNA(Asn) or Gln-tRNA(Gln) through the transamidation of misacylated Asp-tRNA(Asn) or Glu-tRNA(Gln) in organisms which lack either or both of asparaginyl-tRNA or glutaminyl-tRNA synthetases. The reaction takes place in the presence of glutamine and ATP through an activated phospho-Asp-tRNA(Asn) or phospho-Glu-tRNA(Gln). This is Aspartyl/glutamyl-tRNA(Asn/Gln) amidotransferase subunit B from Nitrosococcus oceani (strain ATCC 19707 / BCRC 17464 / JCM 30415 / NCIMB 11848 / C-107).